The following is a 148-amino-acid chain: Aspartate 1-decarboxylase (148 aa).

Ser25 acts as the Schiff-base intermediate with substrate; via pyruvic acid in catalysis. Ser25 bears the Pyruvic acid (Ser) mark. Thr57 contacts substrate. Tyr58 (proton donor) is an active-site residue. 73–75 (GAA) is a substrate binding site.

The protein belongs to the PanD family. Heterooctamer of four alpha and four beta subunits. The cofactor is pyruvate. Post-translationally, is synthesized initially as an inactive proenzyme, which is activated by self-cleavage at a specific serine bond to produce a beta-subunit with a hydroxyl group at its C-terminus and an alpha-subunit with a pyruvoyl group at its N-terminus.

Its subcellular location is the cytoplasm. It catalyses the reaction L-aspartate + H(+) = beta-alanine + CO2. Its pathway is cofactor biosynthesis; (R)-pantothenate biosynthesis; beta-alanine from L-aspartate: step 1/1. Its function is as follows. Catalyzes the pyruvoyl-dependent decarboxylation of aspartate to produce beta-alanine. This is Aspartate 1-decarboxylase from Rhodococcus opacus (strain B4).